Consider the following 210-residue polypeptide: HTH-type transcriptional repressor FabR (210 aa).

Residues 10-70 (KTRRSLVEAA…TMVDESGLML (61 aa)) form the HTH tetR-type domain. The segment at residues 33–52 (SLREVAREAGIAPTSFYRHF) is a DNA-binding region (H-T-H motif).

Homodimer.

It is found in the cytoplasm. Functionally, represses the transcription of fabB, involved in unsaturated fatty acid (UFA) biosynthesis. By controlling UFA production, FabR directly influences the physical properties of the membrane bilayer. This Citrobacter koseri (strain ATCC BAA-895 / CDC 4225-83 / SGSC4696) protein is HTH-type transcriptional repressor FabR.